A 318-amino-acid polypeptide reads, in one-letter code: L-lactate dehydrogenase (318 aa).

NAD(+) contacts are provided by residues V18, D39, K44, Y69, and G83–A84. Substrate-binding residues include Q86 and R92. Residues S105, V122–N124, and S147 contribute to the NAD(+) site. N124–D127 contributes to the substrate binding site. D152 to R155 contacts substrate. H179 functions as the Proton acceptor in the catalytic mechanism. At Y225 the chain carries Phosphotyrosine. T234 contributes to the substrate binding site.

It belongs to the LDH/MDH superfamily. LDH family. Homotetramer.

The protein localises to the cytoplasm. The enzyme catalyses (S)-lactate + NAD(+) = pyruvate + NADH + H(+). It functions in the pathway fermentation; pyruvate fermentation to lactate; (S)-lactate from pyruvate: step 1/1. Catalyzes the conversion of lactate to pyruvate. The chain is L-lactate dehydrogenase from Clostridium botulinum (strain Langeland / NCTC 10281 / Type F).